The following is a 938-amino-acid chain: Isoleucine--tRNA ligase (938 aa).

The 'HIGH' region signature appears at 58–68; that stretch reads PYANGSIHIGH. Glu561 lines the L-isoleucyl-5'-AMP pocket. The 'KMSKS' region signature appears at 602–606; the sequence is KMSKS. Lys605 provides a ligand contact to ATP. Zn(2+)-binding residues include Cys901, Cys904, Cys921, and Cys924.

It belongs to the class-I aminoacyl-tRNA synthetase family. IleS type 1 subfamily. As to quaternary structure, monomer. The cofactor is Zn(2+).

It is found in the cytoplasm. It catalyses the reaction tRNA(Ile) + L-isoleucine + ATP = L-isoleucyl-tRNA(Ile) + AMP + diphosphate. Functionally, catalyzes the attachment of isoleucine to tRNA(Ile). As IleRS can inadvertently accommodate and process structurally similar amino acids such as valine, to avoid such errors it has two additional distinct tRNA(Ile)-dependent editing activities. One activity is designated as 'pretransfer' editing and involves the hydrolysis of activated Val-AMP. The other activity is designated 'posttransfer' editing and involves deacylation of mischarged Val-tRNA(Ile). The chain is Isoleucine--tRNA ligase from Sodalis glossinidius (strain morsitans).